We begin with the raw amino-acid sequence, 349 residues long: Homeobox-leucine zipper protein HOX7 (349 aa).

A disordered region spans residues 42 to 186 (RATRRDEQDD…PKQKSDLANR (145 aa)). Polar residues-rich tracts occupy residues 89-99 (SAETGSANSEM) and 121-135 (SSPS…RQQV). Positions 150 to 209 (GARKKLRLSKEQSSFLEDSFKEHSTLTPKQKSDLANRLNLRPRQVEVWFQNRRARTKLKQ) form a DNA-binding region, homeobox. The span at 167–183 (DSFKEHSTLTPKQKSDL) shows a compositional bias: basic and acidic residues. The interval 208–252 (KQTEVDCEHLKRCCERLTRENRRLQREVAELRGALRTTTSSYPPL) is leucine-zipper.

It belongs to the HD-ZIP homeobox family. Class II subfamily. In terms of assembly, homodimer. May form a heterodimer with HOX1, HOX2 or HOX3. In terms of tissue distribution, expressed in seedlings, roots, leaves, nodes, internodes, flowers and embryo.

The protein resides in the nucleus. Probable transcription factor that binds to the DNA sequence 5'-CAAT[GC]ATTG-3'. This Oryza sativa subsp. indica (Rice) protein is Homeobox-leucine zipper protein HOX7 (HOX7).